The following is a 400-amino-acid chain: Methylthioribose kinase (400 aa).

ATP is bound by residues Asn40, Lys57, and 111-113 (EDL). Residue Asp229 participates in substrate binding. An ATP-binding site is contributed by 246–248 (DAE). Position 344 (Arg344) interacts with substrate.

The protein belongs to the methylthioribose kinase family. As to quaternary structure, homodimer.

The enzyme catalyses 5-(methylsulfanyl)-D-ribose + ATP = 5-(methylsulfanyl)-alpha-D-ribose 1-phosphate + ADP + H(+). The protein operates within amino-acid biosynthesis; L-methionine biosynthesis via salvage pathway; S-methyl-5-thio-alpha-D-ribose 1-phosphate from S-methyl-5'-thioadenosine (hydrolase route): step 2/2. Catalyzes the phosphorylation of methylthioribose into methylthioribose-1-phosphate. This is Methylthioribose kinase from Pectobacterium atrosepticum (strain SCRI 1043 / ATCC BAA-672) (Erwinia carotovora subsp. atroseptica).